The chain runs to 201 residues: MSLSTLKNRRERGFFDGQFLIAMPGMEDRNFARTVIYICAHSDAGAMGFVINRPQSLTFTDVLLHLDMIKQEEPIVLPQRARDFPIQTGGPVESGRGFVLHSDDYASDSSIPVSDDICLTATLDIVRAISKGAGPKRATMLLGYSSWGAGQLENEVANNGWLTCPANEELIFDRSLEDKYERALAGMGVTAAMLSAEAGHA.

This sequence belongs to the UPF0301 (AlgH) family.

The polypeptide is UPF0301 protein RHECIAT_CH0001061 (Rhizobium etli (strain CIAT 652)).